The chain runs to 257 residues: Ciliary microtubule associated protein 1B (257 aa).

3 STPGR repeats span residues Pro103 to Arg129, Pro182 to Arg207, and Pro218 to Arg243.

It belongs to the CIMAP family.

It localises to the cell projection. The protein localises to the cilium. Its subcellular location is the flagellum. The protein is Ciliary microtubule associated protein 1B (cimap1b) of Danio rerio (Zebrafish).